The sequence spans 156 residues: RING finger protein 224 (156 aa).

An RING-type zinc finger spans residues 23–70 (CIICYSAYDLSVHLPRRLYCGHTFCQACMQRLDMPAHEQHWIPCPQCR).

This Mus musculus (Mouse) protein is RING finger protein 224 (Rnf224).